Consider the following 309-residue polypeptide: Foldase protein PrsA (309 aa).

A signal peptide spans 1-20; the sequence is MKKKIVAGAVTLLSVAVLAA. Cys-21 carries N-palmitoyl cysteine lipidation. A lipid anchor (S-diacylglycerol cysteine) is attached at Cys-21. The region spanning 144 to 241 is the PpiC domain; the sequence is TPEVTAQIIK…ASYYIVKLVS (98 aa).

Belongs to the PrsA family.

It localises to the cell membrane. The enzyme catalyses [protein]-peptidylproline (omega=180) = [protein]-peptidylproline (omega=0). Plays a major role in protein secretion by helping the post-translocational extracellular folding of several secreted proteins. The polypeptide is Foldase protein PrsA (Streptococcus gordonii (strain Challis / ATCC 35105 / BCRC 15272 / CH1 / DL1 / V288)).